Reading from the N-terminus, the 512-residue chain is ATP synthase subunit alpha (512 aa).

An ATP-binding site is contributed by 169-176 (GDRQTGKT).

Belongs to the ATPase alpha/beta chains family. In terms of assembly, F-type ATPases have 2 components, CF(1) - the catalytic core - and CF(0) - the membrane proton channel. CF(1) has five subunits: alpha(3), beta(3), gamma(1), delta(1), epsilon(1). CF(0) has four main subunits: a(1), b(1), b'(1) and c(9-12).

The protein resides in the cell inner membrane. It catalyses the reaction ATP + H2O + 4 H(+)(in) = ADP + phosphate + 5 H(+)(out). In terms of biological role, produces ATP from ADP in the presence of a proton gradient across the membrane. The alpha chain is a regulatory subunit. The protein is ATP synthase subunit alpha of Cereibacter sphaeroides (strain ATCC 17025 / ATH 2.4.3) (Rhodobacter sphaeroides).